A 289-amino-acid polypeptide reads, in one-letter code: Cysteine-rich venom protein Mr30 (289 aa).

Positions 1 to 24 are cleaved as a signal peptide; that stretch reads MLSTMQTVGAILMLSIVFVAGTKR. At glutamate 33 the chain carries 4-carboxyglutamate. Residues 62 to 184 form the SCP domain; the sequence is VRMHNVIRAT…GEDRYFVCNY (123 aa).

This sequence belongs to the CRISP family. Contains 11 disulfide bonds. Expressed by the venom duct.

The protein resides in the secreted. Functionally, has no proteolytic activity. The polypeptide is Cysteine-rich venom protein Mr30 (Conus marmoreus (Marble cone)).